A 138-amino-acid chain; its full sequence is Protein E6 (138 aa).

2 zinc fingers span residues 25 to 61 (CNFCTGFLTYQELLEFDYKDFNLLWKDGFVFGCCAAC) and 98 to 134 (CLICLKRLDLLEKLDICAQHREFHRVRNRWKGVCRHC).

Belongs to the papillomaviridae E6 protein family. In terms of assembly, forms homodimers. Interacts with ubiquitin-protein ligase UBE3A/E6-AP; this interaction stimulates UBE3A ubiquitin activity. Interacts with host BAK1.

It is found in the host cytoplasm. Its subcellular location is the host nucleus. Its function is as follows. Plays a major role in the induction and maintenance of cellular transformation. E6 associates with host UBE3A/E6-AP ubiquitin-protein ligase and modulates its activity. Protects host keratinocytes from apoptosis by mediating the degradation of host BAK1. May also inhibit host immune response. The sequence is that of Protein E6 from Homo sapiens (Human).